The primary structure comprises 141 residues: Large ribosomal subunit protein uL11 (141 aa).

It belongs to the universal ribosomal protein uL11 family. Part of the ribosomal stalk of the 50S ribosomal subunit. Interacts with L10 and the large rRNA to form the base of the stalk. L10 forms an elongated spine to which L12 dimers bind in a sequential fashion forming a multimeric L10(L12)X complex. In terms of processing, one or more lysine residues are methylated.

Functionally, forms part of the ribosomal stalk which helps the ribosome interact with GTP-bound translation factors. The protein is Large ribosomal subunit protein uL11 of Opitutus terrae (strain DSM 11246 / JCM 15787 / PB90-1).